The chain runs to 2773 residues: Peramine synthetase A (2773 aa).

The adenylation 1 stretch occupies residues 246 to 644 (FEDQVYSQPL…GRKDAQVKIR (399 aa)). The Carrier 1 domain maps to 774–850 (QPTCEMEERM…DLAKNCSQTL (77 aa)). Serine 811 carries the post-translational modification O-(pantetheine 4'-phosphoryl)serine. The segment at 888 to 1301 (QDAYPCTRLQ…MSSAEDLEQI (414 aa)) is condensation. The tract at residues 1321 to 1720 (ADQVQARPDS…GRKDTQVKVR (400 aa)) is adenylation 2. Residues 1810-1949 (IGRDFVGWSS…IIQHLASLGS (140 aa)) form a methylation (Met) domain region. A disordered region spans residues 2250–2271 (MLSESLQQKAPPTARKRLPSTA). The 79-residue stretch at 2267–2345 (LPSTAPERAM…HLLQTAAAGV (79 aa)) folds into the Carrier 2 domain. Serine 2304 is modified (O-(pantetheine 4'-phosphoryl)serine). Residues 2397 to 2715 (TVVLTGANGF…LQDLADTARS (319 aa)) are thiesterase (TE) domain.

It belongs to the NRP synthetase family. Requires pantetheine 4'-phosphate as cofactor.

It catalyses the reaction (S)-1-pyrroline-5-carboxylate + L-arginine + S-adenosyl-L-methionine + 2 ATP = peramine + 2 AMP + S-adenosyl-L-homocysteine + 2 diphosphate + H2O + 2 H(+). Nonribosomal peptide synthetase involved in the biosynthesis of peramine, a pyrrolopyrazine synthesized in association with the grass host that protects the plant from insect herbivory. The single multifunctional NRPS perA seems to be responsible for all catalytic steps in the biosynthesis of peramine. The condensation domain of perA is proposed to catalyze formation of a peptide bond between 1-pyrroline-5-carboxylate and arginine. The methylation domain of perA would catalyze the N-methylation of the alpha-amino group of arginine. The reductase domain is proposed to be responsible for reduction of the thioester and the cyclization to form an iminium ion resulting in release from the peptide synthetase. Deprotonation of this intermediate and oxidation of the pyrroline ring would give rise to peramine. This final oxidation to give the pyrrole functionality may be spontaneous. The sequence is that of Peramine synthetase A from Epichloe festucae (strain Fl1).